The primary structure comprises 177 residues: O-acetyl-ADP-ribose deacetylase (177 aa).

In terms of domain architecture, Macro spans 1 to 175; the sequence is MKTRIHVVQG…LYERLLTQQG (175 aa). Substrate is bound by residues 11–12, Asn25, 33–35, and 122–126; these read DI, GVD, and STGVY. Asp35 acts as the Proton acceptor in catalysis.

The protein belongs to the MacroD-type family. YmdB subfamily. In terms of assembly, homodimer. Interacts with RNase III.

It carries out the reaction 3''-O-acetyl-ADP-D-ribose + H2O = ADP-D-ribose + acetate + H(+). It catalyses the reaction 2''-O-acetyl-ADP-D-ribose + H2O = ADP-D-ribose + acetate + H(+). Functionally, deacetylates O-acetyl-ADP ribose to yield ADP-ribose and free acetate. Down-regulates ribonuclease 3 (RNase III) activity. Acts by interacting directly with the region of the ribonuclease that is required for dimerization/activation. This is O-acetyl-ADP-ribose deacetylase from Escherichia coli O157:H7.